The sequence spans 362 residues: UPF0324 membrane protein YPO1307/y2878/YP_1285 (362 aa).

Transmembrane regions (helical) follow at residues 21–38, 48–70, 102–124, 139–161, 168–190, 240–257, 278–300, 305–327, and 334–356; these read YIPGLVLTGVITGLALNV, GLGALTLAILFGIIVGNTLYPWL, VADVGATGMVIDLLTLSSTFILA, VMLIGAGSSICGAAAIMATEPVL, VAVAVATVVIFGTLAIFVYPWLY, MIRVMMLAPFLLLLSAYL, WFAVIFILMAGFNSLNLLPAVWV, TLDTILLAMAMAALGLTTHIGSI, and PLLLALLLFIWLLVGGTGINLFV.

The protein belongs to the UPF0324 family.

It localises to the cell membrane. This Yersinia pestis protein is UPF0324 membrane protein YPO1307/y2878/YP_1285.